A 659-amino-acid polypeptide reads, in one-letter code: MGEFKIQSKFKPTGDQPKAIDTLVQSIENGNRGQTLLGVTGSGKTFTMANIIERTQKPTLILAHNKTLAAQLCAEFKEFFPDNIVEYFVSYYDYYQPEAYVPQTDTFIEKDASINDEIDKLRHSATSALLERRDVIIVASVSCIYGLGNPEEYKKLTISLRPGMIKDRDEVIKKLIEIQYERNDIDFARGTFRVRGDNLDIIPSSSSSKGIRIEFFGDEIDRIREFDVLTGNIIGERQHVSITPASHFAASEETLEKSIRVIEDELEDRLKVLTAEDKILEAQRLKQRTNYDIEMIREMGYCQGIENYSRILDGRMPGTPPQTLLDYFPEDFLMFIDESHVTLPQVRAMYAGDRSRKTSLVEFGFRLPCAFDNRPLKFSEFESKINQVVFVSATPGEYELDHSKVVAEQIIRPTGLLDPVIEIRPIQGQIDDLYGEIQRTVQRGFRVLITTLTKRMAEDLTKYLKDLNVKATYMHSDIDTLERMKIIRELRLGEVDVLIGINLLREGLDIPEVALVAILDADKEGFLRSETSLIQTIGRAARNSESKVIMYADNITKSMDKSIKETERRRVIQMEYNEEHNITPTTVIKGVRDIIEATKVSEEKENYEDEVKKAAKKDIPVEKLIEQYEEEMKEAAKNLQFERAAELRDIIKDLKENSK.

The 158-residue stretch at 25–182 (QSIENGNRGQ…KKLIEIQYER (158 aa)) folds into the Helicase ATP-binding domain. 38 to 45 (GVTGSGKT) contacts ATP. A Beta-hairpin motif is present at residues 91–114 (YYDYYQPEAYVPQTDTFIEKDASI). In terms of domain architecture, Helicase C-terminal spans 429–582 (QIDDLYGEIQ…QMEYNEEHNI (154 aa)). In terms of domain architecture, UVR spans 622-657 (EKLIEQYEEEMKEAAKNLQFERAAELRDIIKDLKEN).

This sequence belongs to the UvrB family. Forms a heterotetramer with UvrA during the search for lesions. Interacts with UvrC in an incision complex.

The protein localises to the cytoplasm. Functionally, the UvrABC repair system catalyzes the recognition and processing of DNA lesions. A damage recognition complex composed of 2 UvrA and 2 UvrB subunits scans DNA for abnormalities. Upon binding of the UvrA(2)B(2) complex to a putative damaged site, the DNA wraps around one UvrB monomer. DNA wrap is dependent on ATP binding by UvrB and probably causes local melting of the DNA helix, facilitating insertion of UvrB beta-hairpin between the DNA strands. Then UvrB probes one DNA strand for the presence of a lesion. If a lesion is found the UvrA subunits dissociate and the UvrB-DNA preincision complex is formed. This complex is subsequently bound by UvrC and the second UvrB is released. If no lesion is found, the DNA wraps around the other UvrB subunit that will check the other stand for damage. The chain is UvrABC system protein B from Clostridium perfringens (strain ATCC 13124 / DSM 756 / JCM 1290 / NCIMB 6125 / NCTC 8237 / Type A).